The chain runs to 373 residues: Inhibitor of nuclear factor kappa-B kinase-interacting protein (373 aa).

Residues 1–11 (MSEVKSRKKPG) show a composition bias toward basic residues. Positions 1–38 (MSEVKSRKKPGPKVAAPEPEKRSDGRKNPEARGDAGWA) are disordered. Over residues 18 to 33 (EPEKRSDGRKNPEARG) the composition is skewed to basic and acidic residues. The helical transmembrane segment at 43 to 59 (GLSLLSLAMTLGLAWLV) threads the bilayer. Coiled coils occupy residues 86–257 (LQSK…NKLS) and 285–324 (QDLI…TLEG). Asn-151 is a glycosylation site (N-linked (GlcNAc...) asparagine).

Post-translationally, N-glycosylated at Asn-151.

The protein resides in the endoplasmic reticulum membrane. Functionally, target of p53/TP53 with pro-apoptotic function. The chain is Inhibitor of nuclear factor kappa-B kinase-interacting protein (Ikbip) from Mus musculus (Mouse).